A 636-amino-acid chain; its full sequence is Probable potassium transport system protein Kup (636 aa).

12 consecutive transmembrane segments (helical) span residues 23-43 (MALM…SPLY), 57-77 (PAHV…VVSL), 111-131 (WLLI…SMIT), 148-168 (HTLE…LFAI), 179-199 (LFGP…GYQI), 217-237 (FIAE…LALT), 258-278 (WFAM…ALLL), 287-307 (PFFL…ATVA), 348-368 (IYLP…VLLF), 377-397 (AYGF…FAVL), 409-429 (WMVL…ANIF), and 431-451 (IHEG…LMMT).

It belongs to the HAK/KUP transporter (TC 2.A.72) family.

It localises to the cell inner membrane. The catalysed reaction is K(+)(in) + H(+)(in) = K(+)(out) + H(+)(out). Its function is as follows. Transport of potassium into the cell. Likely operates as a K(+):H(+) symporter. The protein is Probable potassium transport system protein Kup of Bordetella bronchiseptica (strain ATCC BAA-588 / NCTC 13252 / RB50) (Alcaligenes bronchisepticus).